Here is a 436-residue protein sequence, read N- to C-terminus: Trigger factor (436 aa).

In terms of domain architecture, PPIase FKBP-type spans 162–247 (GDRVIIDFEG…LNNVSEPTLP (86 aa)).

It belongs to the FKBP-type PPIase family. Tig subfamily.

The protein resides in the cytoplasm. The enzyme catalyses [protein]-peptidylproline (omega=180) = [protein]-peptidylproline (omega=0). In terms of biological role, involved in protein export. Acts as a chaperone by maintaining the newly synthesized protein in an open conformation. Functions as a peptidyl-prolyl cis-trans isomerase. The sequence is that of Trigger factor from Neisseria gonorrhoeae (strain ATCC 700825 / FA 1090).